The sequence spans 90 residues: Small ribosomal subunit protein uS19 (90 aa).

It belongs to the universal ribosomal protein uS19 family.

Its function is as follows. Protein S19 forms a complex with S13 that binds strongly to the 16S ribosomal RNA. The sequence is that of Small ribosomal subunit protein uS19 from Mesomycoplasma hyopneumoniae (strain 232) (Mycoplasma hyopneumoniae).